The following is a 93-amino-acid chain: Small ribosomal subunit protein uS19 (93 aa).

Belongs to the universal ribosomal protein uS19 family.

Protein S19 forms a complex with S13 that binds strongly to the 16S ribosomal RNA. This chain is Small ribosomal subunit protein uS19, found in Mycolicibacterium paratuberculosis (strain ATCC BAA-968 / K-10) (Mycobacterium paratuberculosis).